The sequence spans 227 residues: A-type potassium channel modulatory protein KCNIP1 (227 aa).

Residues 38-94 (LEMTMVCHRPEGLEQLEAQTNFTKRELQVLYRGFKNECPSGVVNEETFKQIYAQFFP) enclose the EF-hand 1; degenerate domain. EF-hand domains follow at residues 97-132 (DAST…LLRG), 133-168 (TVHE…IYDM), and 181-216 (TPRQ…DDNI). Positions 146, 148, 150, 152, 157, 194, 196, 198, and 205 each coordinate Ca(2+). An interaction with KCND2 region spans residues 214-227 (DNIMRSLQLFQNVM).

The protein belongs to the recoverin family. In terms of assembly, component of heteromultimeric potassium channels. Identified in potassium channel complexes containing KCND1, KCND2, KCND3, KCNIP1, KCNIP2, KCNIP3, KCNIP4, DPP6 and DPP10. Part of a heterooctamer composed of the tetrameric channel and four KCNIP1 chains. Probably part of a complex consisting of KCNIP1, KCNIP2 isoform 3 and KCND2. Self-associates to form homodimers and homotetramers. Interacts with KCNIP2 isoform 3 in a calcium-dependent manner. Interacts with KCND2; this interaction mediates the capture of both the N- and C-terminus of KCND2, thus preventing KCND2 N-type inactivation and modulates the channel gating kinetics. Interacts with KCND3; each KCNIP1 monomer interacts with two adjacent KCND3 subunits, through both the N-terminal inactivation ball of a KCND3 subunit and a C-terminal helix from the adjacent KCND3 subunit, clamping them together; this interaction stabilizes the tetrameric form and modulates the channel gating kinetics namely channel activation and inactivation kinetics and rate of recovery from inactivation. In terms of tissue distribution, detected in hippocampus and in the molecular layer of the dentate gyrus (at protein level). Isoform 1 and isoform 2 are predominantly expressed at equal levels in brain. Colocalizes with KCND3 in inhibitory interneurons in cortex and hippocampus and in striatal interneurons.

The protein resides in the cell membrane. The protein localises to the cytoplasm. Its subcellular location is the cell projection. It localises to the dendrite. Regulatory subunit of Kv4/D (Shal)-type voltage-gated rapidly inactivating A-type potassium channels. Regulates channel density, inactivation kinetics and rate of recovery from inactivation in a calcium-dependent and isoform-specific manner. Modulates KCND2/Kv4.2 currents. In vitro, modulates KCND1/Kv4.1 currents. Increases the presence of KCND2 at the cell surface. This is A-type potassium channel modulatory protein KCNIP1 from Rattus norvegicus (Rat).